The primary structure comprises 312 residues: Pectin lyase (312 aa).

R201 is an active-site residue. Residues 254–274 (GSGTFTDTNSVPPITNQKSPK) are disordered. The segment covering 256-274 (GTFTDTNSVPPITNQKSPK) has biased composition (polar residues).

Belongs to the polysaccharide lyase 1 family.

The catalysed reaction is Eliminative cleavage of (1-&gt;4)-alpha-D-galacturonan methyl ester to give oligosaccharides with 4-deoxy-6-O-methyl-alpha-D-galact-4-enuronosyl groups at their non-reducing ends.. The polypeptide is Pectin lyase (pnl) (Pseudomonas marginalis (Pseudomonas panacis)).